Here is a 121-residue protein sequence, read N- to C-terminus: NADH-quinone oxidoreductase subunit A 1 (121 aa).

3 helical membrane passes run 11–31 (IAIF…APFA), 65–85 (LVSI…PWAV), and 90–110 (MGWF…VGFI).

The protein belongs to the complex I subunit 3 family. In terms of assembly, NDH-1 is composed of 14 different subunits. Subunits NuoA, H, J, K, L, M, N constitute the membrane sector of the complex.

It is found in the cell inner membrane. The enzyme catalyses a quinone + NADH + 5 H(+)(in) = a quinol + NAD(+) + 4 H(+)(out). Its function is as follows. NDH-1 shuttles electrons from NADH, via FMN and iron-sulfur (Fe-S) centers, to quinones in the respiratory chain. The immediate electron acceptor for the enzyme in this species is believed to be ubiquinone. Couples the redox reaction to proton translocation (for every two electrons transferred, four hydrogen ions are translocated across the cytoplasmic membrane), and thus conserves the redox energy in a proton gradient. This Rhizobium meliloti (strain 1021) (Ensifer meliloti) protein is NADH-quinone oxidoreductase subunit A 1.